The sequence spans 569 residues: Ribonuclease J (569 aa).

6 residues coordinate Zn(2+): His81, His83, Asp85, His86, His150, and Asp172. 373–377 (HASGH) is a binding site for substrate. His399 lines the Zn(2+) pocket.

The protein belongs to the metallo-beta-lactamase superfamily. RNA-metabolizing metallo-beta-lactamase-like family. Bacterial RNase J subfamily. As to quaternary structure, homodimer, may be a subunit of the RNA degradosome. Zn(2+) is required as a cofactor.

Its subcellular location is the cytoplasm. Functionally, an RNase that has 5'-3' exonuclease and possibly endoonuclease activity. Involved in maturation of rRNA and in some organisms also mRNA maturation and/or decay. In Mycoplasma pneumoniae (strain ATCC 29342 / M129 / Subtype 1) (Mycoplasmoides pneumoniae), this protein is Ribonuclease J.